Consider the following 189-residue polypeptide: Crossover junction endodeoxyribonuclease RuvC (189 aa).

Residues aspartate 7, glutamate 68, and aspartate 141 contribute to the active site. Mg(2+)-binding residues include aspartate 7, glutamate 68, and aspartate 141.

This sequence belongs to the RuvC family. Homodimer which binds Holliday junction (HJ) DNA. The HJ becomes 2-fold symmetrical on binding to RuvC with unstacked arms; it has a different conformation from HJ DNA in complex with RuvA. In the full resolvosome a probable DNA-RuvA(4)-RuvB(12)-RuvC(2) complex forms which resolves the HJ. Mg(2+) is required as a cofactor.

The protein localises to the cytoplasm. The catalysed reaction is Endonucleolytic cleavage at a junction such as a reciprocal single-stranded crossover between two homologous DNA duplexes (Holliday junction).. Its function is as follows. The RuvA-RuvB-RuvC complex processes Holliday junction (HJ) DNA during genetic recombination and DNA repair. Endonuclease that resolves HJ intermediates. Cleaves cruciform DNA by making single-stranded nicks across the HJ at symmetrical positions within the homologous arms, yielding a 5'-phosphate and a 3'-hydroxyl group; requires a central core of homology in the junction. The consensus cleavage sequence is 5'-(A/T)TT(C/G)-3'. Cleavage occurs on the 3'-side of the TT dinucleotide at the point of strand exchange. HJ branch migration catalyzed by RuvA-RuvB allows RuvC to scan DNA until it finds its consensus sequence, where it cleaves and resolves the cruciform DNA. This Nocardia farcinica (strain IFM 10152) protein is Crossover junction endodeoxyribonuclease RuvC.